Consider the following 298-residue polypeptide: Bifunctional protein FolD (298 aa).

Residues 165-167, serine 190, and isoleucine 231 contribute to the NADP(+) site; that span reads GRS.

This sequence belongs to the tetrahydrofolate dehydrogenase/cyclohydrolase family. Homodimer.

The enzyme catalyses (6R)-5,10-methylene-5,6,7,8-tetrahydrofolate + NADP(+) = (6R)-5,10-methenyltetrahydrofolate + NADPH. It catalyses the reaction (6R)-5,10-methenyltetrahydrofolate + H2O = (6R)-10-formyltetrahydrofolate + H(+). It participates in one-carbon metabolism; tetrahydrofolate interconversion. Catalyzes the oxidation of 5,10-methylenetetrahydrofolate to 5,10-methenyltetrahydrofolate and then the hydrolysis of 5,10-methenyltetrahydrofolate to 10-formyltetrahydrofolate. This is Bifunctional protein FolD from Prochlorococcus marinus subsp. pastoris (strain CCMP1986 / NIES-2087 / MED4).